Reading from the N-terminus, the 82-residue chain is Consomatin Ro2 (82 aa).

The signal sequence occupies residues 1–22; sequence MQTAYWLMVMMMVWITAPLYEG. The propeptide occupies 23–57; that stretch reads GKPNDVIRGLVPDDLTPQFILRSLISRRRSDKDVR. Cys-62 and Cys-68 are disulfide-bonded. The residue at position 64 (Trp-64) is a D-tryptophan. A 4-hydroxyproline mark is found at Pro-69 and Pro-70. Residues 72–82 constitute a propeptide that is removed on maturation; it reads LWRRHDRKGKD.

Belongs to the conotoxin C superfamily. Consomatin family. Expressed by the venom duct.

It localises to the secreted. Moderately activates human somatostatin receptors (SSTR) with a preferential activation of SSTR1 and SSTR4. In vivo, does not cause behavioral changes in mice within a few minutes of intracranial injection, but causes a progressive loss of movement thereafter. Four to five hours after injection, mice recover, even with the highest dose tested. Shows antinociception and antihyperalgesia activities in two mouse models of acute pain, most probably by acting outside the central nervous system. The chain is Consomatin Ro2 from Conus rolani (Cone snail).